Consider the following 409-residue polypeptide: Nucleoprotein (409 aa).

Disordered stretches follow at residues methionine 1–asparagine 32, leucine 44–glycine 69, alanine 121–aspartate 194, and valine 238–asparagine 259. The RNA-binding stretch occupies residues serine 29–leucine 160. The region spanning glycine 31 to aspartate 156 is the CoV N NTD domain. Low complexity predominate over residues arginine 162–proline 179. 2 stretches are compositionally biased toward basic and acidic residues: residues proline 180–serine 192 and lysine 247–asparagine 259. Serine 190 and serine 192 each carry phosphoserine; by host. A CoV N CTD domain is found at threonine 215 to proline 331. Positions arginine 226–aspartate 333 are dimerization. Cysteine 320 and cysteine 323 are disulfide-bonded. The disordered stretch occupies residues glycine 326–leucine 409. Low complexity predominate over residues arginine 341–arginine 356. Basic residues predominate over residues glutamine 358–lysine 367. Over residues lysine 368–asparagine 384 the composition is skewed to basic and acidic residues. The residue at position 378 (threonine 378) is a Phosphothreonine; by host. The residue at position 379 (serine 379) is a Phosphoserine; by host.

Belongs to the gammacoronavirus nucleocapsid protein family. As to quaternary structure, homooligomer. Both monomeric and oligomeric forms interact with RNA. Interacts with protein M. Interacts with NSP3; this interaction serves to tether the genome to the newly translated replicase-transcriptase complex at a very early stage of infection. Post-translationally, ADP-ribosylated. The ADP-ribosylation is retained in the virion during infection. In terms of processing, phosphorylated on serine and threonine residues.

Its subcellular location is the virion. The protein resides in the host endoplasmic reticulum-Golgi intermediate compartment. The protein localises to the host Golgi apparatus. Its function is as follows. Packages the positive strand viral genome RNA into a helical ribonucleocapsid (RNP) and plays a fundamental role during virion assembly through its interactions with the viral genome and membrane protein M. Plays an important role in enhancing the efficiency of subgenomic viral RNA transcription as well as viral replication. This chain is Nucleoprotein, found in Gallus gallus (Chicken).